Here is a 429-residue protein sequence, read N- to C-terminus: Adenylosuccinate synthetase (429 aa).

GTP-binding positions include 13–19 and 41–43; these read GDEGKGK and GHT. Asp14 acts as the Proton acceptor in catalysis. Positions 14 and 41 each coordinate Mg(2+). IMP is bound by residues 14 to 17, 39 to 42, Thr130, Arg144, Gln224, Thr239, and Arg303; these read DEGK and NAGH. The active-site Proton donor is the His42. A substrate-binding site is contributed by 299–305; the sequence is ATTGRAR. GTP is bound by residues Arg305, 331–333, and 412–414; these read KLD and STG.

This sequence belongs to the adenylosuccinate synthetase family. As to quaternary structure, homodimer. It depends on Mg(2+) as a cofactor.

Its subcellular location is the cytoplasm. The enzyme catalyses IMP + L-aspartate + GTP = N(6)-(1,2-dicarboxyethyl)-AMP + GDP + phosphate + 2 H(+). The protein operates within purine metabolism; AMP biosynthesis via de novo pathway; AMP from IMP: step 1/2. Plays an important role in the de novo pathway of purine nucleotide biosynthesis. Catalyzes the first committed step in the biosynthesis of AMP from IMP. The polypeptide is Adenylosuccinate synthetase (Psychrobacter cryohalolentis (strain ATCC BAA-1226 / DSM 17306 / VKM B-2378 / K5)).